A 236-amino-acid polypeptide reads, in one-letter code: MLPDCLSAEGELRCRRLLAGATARLRARPASAAVLVPLCSVRGVPALLYTLRSSRLTGRHKGDVSFPGGKCDPADQDVVHTALRETREELGLAVPEEHVWGLLRPVYDPQKATVVPVLAGVGPLDPQSLRPNSEEVDEVFALPLAHLLQTQNQGYTHFCRGGHFRYTLPVFLHGPHRVWGLTAVITEFALQLLAPGTYQPRLAGLTCSGAEGLARPKQPLASPCQASSTPGLNKGL.

In terms of domain architecture, Nudix hydrolase spans 25-172; that stretch reads LRARPASAAV…HFRYTLPVFL (148 aa). K70 bears the N6-succinyllysine mark. The short motif at 70 to 91 is the Nudix box element; the sequence is KCDPADQDVVHTALRETREELG. Positions 85 and 89 each coordinate Mg(2+).

The protein belongs to the Nudix hydrolase family. Monomer. Requires Mg(2+) as cofactor. The cofactor is Mn(2+).

Its subcellular location is the mitochondrion. It carries out the reaction an acyl-CoA + H2O = an acyl-4'-phosphopantetheine + adenosine 3',5'-bisphosphate + 2 H(+). The catalysed reaction is CoA + H2O = (R)-4'-phosphopantetheine + adenosine 3',5'-bisphosphate + 2 H(+). The enzyme catalyses acetyl-CoA + H2O = S-acetyl-4'-phosphopantetheine + adenosine 3',5'-bisphosphate + 2 H(+). It catalyses the reaction butanoyl-CoA + H2O = S-butanoyl-4'-phosphopantetheine + adenosine 3',5'-bisphosphate + 2 H(+). It carries out the reaction hexanoyl-CoA + H2O = hexanoyl-4'-phosphopantetheine + adenosine 3',5'-bisphosphate + 2 H(+). The catalysed reaction is octanoyl-CoA + H2O = S-octanoyl-4'-phosphopantetheine + adenosine 3',5'-bisphosphate + 2 H(+). The enzyme catalyses propanoyl-CoA + H2O = propanoyl-4'-phosphopantetheine + adenosine 3',5'-bisphosphate + 2 H(+). It catalyses the reaction malonyl-CoA + H2O = malonyl-4'-phosphopantetheine + adenosine 3',5'-bisphosphate + 2 H(+). It carries out the reaction succinyl-CoA + H2O = succinyl-4'-phosphopantetheine + adenosine 3',5'-bisphosphate + 2 H(+). The catalysed reaction is a 5'-end CoA-ribonucleoside in mRNA + H2O = a 5'-end phospho-adenosine-phospho-ribonucleoside in mRNA + (R)-4'-phosphopantetheine + 2 H(+). Its function is as follows. Acyl-CoA diphosphatase that mediates the hydrolysis of a wide range of CoA and CoA esters yielding 3',5'-ADP and the corresponding 4'-phosphopantetheine derivative as products. Hydrolyzes short- and medium-chain acyl-CoAs, exhibiting the highest activity toward free CoA, hexanoyl-CoA, and octanoyl-CoA and the lowest activity against acetyl-CoA. Exhibits decapping activity towards dpCoA-capped RNAs in vitro. The protein is Mitochondrial coenzyme A diphosphatase NUDT8 (NUDT8) of Homo sapiens (Human).